Consider the following 113-residue polypeptide: uncharacterized protein (113 aa).

To H.influenzae HI_1053 and P.denitrificans COX locus Uncharacterized protein 4.

This is an uncharacterized protein from Cupriavidus necator (strain ATCC 17699 / DSM 428 / KCTC 22496 / NCIMB 10442 / H16 / Stanier 337) (Ralstonia eutropha).